Reading from the N-terminus, the 689-residue chain is Glycine--tRNA ligase beta subunit (689 aa).

Belongs to the class-II aminoacyl-tRNA synthetase family. Tetramer of two alpha and two beta subunits.

The protein resides in the cytoplasm. The enzyme catalyses tRNA(Gly) + glycine + ATP = glycyl-tRNA(Gly) + AMP + diphosphate. This is Glycine--tRNA ligase beta subunit from Salmonella paratyphi A (strain ATCC 9150 / SARB42).